Reading from the N-terminus, the 204-residue chain is Holliday junction branch migration complex subunit RuvA (204 aa).

A domain I region spans residues 1–63 (MIGWLQGRVL…EDGQFLYGFS (63 aa)). A domain II region spans residues 64-142 (SFLQRQLFRE…KNDLFLCDES (79 aa)). Residues 143–152 (ESSRAPIALS) form a flexible linker region. A domain III region spans residues 152 to 204 (SASEEAIQALIALELAPAEAELWVKKAQKTLAEDADSAALIKTAFALRLQGAK).

The protein belongs to the RuvA family. As to quaternary structure, homotetramer. Forms an RuvA(8)-RuvB(12)-Holliday junction (HJ) complex. HJ DNA is sandwiched between 2 RuvA tetramers; dsDNA enters through RuvA and exits via RuvB. An RuvB hexamer assembles on each DNA strand where it exits the tetramer. Each RuvB hexamer is contacted by two RuvA subunits (via domain III) on 2 adjacent RuvB subunits; this complex drives branch migration. In the full resolvosome a probable DNA-RuvA(4)-RuvB(12)-RuvC(2) complex forms which resolves the HJ.

Its subcellular location is the cytoplasm. In terms of biological role, the RuvA-RuvB-RuvC complex processes Holliday junction (HJ) DNA during genetic recombination and DNA repair, while the RuvA-RuvB complex plays an important role in the rescue of blocked DNA replication forks via replication fork reversal (RFR). RuvA specifically binds to HJ cruciform DNA, conferring on it an open structure. The RuvB hexamer acts as an ATP-dependent pump, pulling dsDNA into and through the RuvAB complex. HJ branch migration allows RuvC to scan DNA until it finds its consensus sequence, where it cleaves and resolves the cruciform DNA. This is Holliday junction branch migration complex subunit RuvA from Dichelobacter nodosus (strain VCS1703A).